An 84-amino-acid polypeptide reads, in one-letter code: Cell division topological specificity factor (84 aa).

It belongs to the MinE family.

Prevents the cell division inhibition by proteins MinC and MinD at internal division sites while permitting inhibition at polar sites. This ensures cell division at the proper site by restricting the formation of a division septum at the midpoint of the long axis of the cell. In Burkholderia cenocepacia (strain ATCC BAA-245 / DSM 16553 / LMG 16656 / NCTC 13227 / J2315 / CF5610) (Burkholderia cepacia (strain J2315)), this protein is Cell division topological specificity factor.